Here is a 558-residue protein sequence, read N- to C-terminus: Biotin biosynthesis bifunctional protein BioHC (558 aa).

The segment at 1–287 (MSNIEPSNVK…FSQPAKIAQI (287 aa)) is carboxylesterase. Substrate-binding positions include W56, 115–116 (SL), and 182–186 (FGLLQ). Residue S115 is the Nucleophile of the active site. Catalysis depends on residues D246 and H274. H274 is a binding site for substrate. Residues 288 to 558 (MLARVHAKRN…EVGFYQLLKV (271 aa)) form a malonyl-ACP O-methyltransferase region.

This sequence in the N-terminal section; belongs to the AB hydrolase superfamily. Carboxylesterase BioH family. In the C-terminal section; belongs to the methyltransferase superfamily.

It carries out the reaction a carboxylic ester + H2O = an alcohol + a carboxylate + H(+). The catalysed reaction is malonyl-[ACP] + S-adenosyl-L-methionine = malonyl-[ACP] methyl ester + S-adenosyl-L-homocysteine. It functions in the pathway cofactor biosynthesis; biotin biosynthesis. Converts the free carboxyl group of a malonyl-thioester to its methyl ester by transfer of a methyl group from S-adenosyl-L-methionine (SAM). It allows to synthesize pimeloyl-ACP via the fatty acid synthetic pathway. Its function is as follows. The physiological role of BioH is to remove the methyl group introduced by BioC when the pimeloyl moiety is complete. It allows to synthesize pimeloyl-ACP via the fatty acid synthetic pathway through the hydrolysis of the ester bonds of pimeloyl-ACP esters. This Saccharophagus degradans (strain 2-40 / ATCC 43961 / DSM 17024) protein is Biotin biosynthesis bifunctional protein BioHC (bioC).